Reading from the N-terminus, the 203-residue chain is N-(5'-phosphoribosyl)anthranilate isomerase (203 aa).

It belongs to the TrpF family.

It catalyses the reaction N-(5-phospho-beta-D-ribosyl)anthranilate = 1-(2-carboxyphenylamino)-1-deoxy-D-ribulose 5-phosphate. The protein operates within amino-acid biosynthesis; L-tryptophan biosynthesis; L-tryptophan from chorismate: step 3/5. The sequence is that of N-(5'-phosphoribosyl)anthranilate isomerase from Sulfurihydrogenibium sp. (strain YO3AOP1).